We begin with the raw amino-acid sequence, 255 residues long: 4-diphosphocytidyl-2-C-methyl-D-erythritol kinase (255 aa).

K6 is an active-site residue. 95–105 lines the ATP pocket; that stretch reads PVCAGLGGGSS. The active site involves D137.

This sequence belongs to the GHMP kinase family. IspE subfamily.

It carries out the reaction 4-CDP-2-C-methyl-D-erythritol + ATP = 4-CDP-2-C-methyl-D-erythritol 2-phosphate + ADP + H(+). It participates in isoprenoid biosynthesis; isopentenyl diphosphate biosynthesis via DXP pathway; isopentenyl diphosphate from 1-deoxy-D-xylulose 5-phosphate: step 3/6. In terms of biological role, catalyzes the phosphorylation of the position 2 hydroxy group of 4-diphosphocytidyl-2C-methyl-D-erythritol. The polypeptide is 4-diphosphocytidyl-2-C-methyl-D-erythritol kinase (Campylobacter jejuni subsp. doylei (strain ATCC BAA-1458 / RM4099 / 269.97)).